Consider the following 343-residue polypeptide: Putative outer membrane protein y4fJ (343 aa).

The signal sequence occupies residues 1-17 (MRMNFSTVLLGSSVALA).

The protein belongs to the alphaproteobacteria porin family.

The protein localises to the cell outer membrane. In terms of biological role, may act as an outer membrane pore. The polypeptide is Putative outer membrane protein y4fJ (Sinorhizobium fredii (strain NBRC 101917 / NGR234)).